A 245-amino-acid polypeptide reads, in one-letter code: Small ribosomal subunit protein uS3 (245 aa).

The region spanning 38 to 106 is the KH type-2 domain; it reads IRKYLNTRLA…EVQINIFEIK (69 aa). The segment at 225 to 245 is disordered; the sequence is YEGSGDKSVKRRKRNGIKKNE. A compositionally biased stretch (basic residues) spans 233-245; it reads VKRRKRNGIKKNE.

It belongs to the universal ribosomal protein uS3 family. Part of the 30S ribosomal subunit. Forms a tight complex with proteins S10 and S14.

Its function is as follows. Binds the lower part of the 30S subunit head. Binds mRNA in the 70S ribosome, positioning it for translation. The protein is Small ribosomal subunit protein uS3 of Azobacteroides pseudotrichonymphae genomovar. CFP2.